A 63-amino-acid polypeptide reads, in one-letter code: Protein CYSTEINE-RICH TRANSMEMBRANE MODULE 12 (63 aa).

The segment at 1 to 34 is disordered; sequence MQDMRDQNPPQGYPAAEQVSEQPGQDKKKKKPRF. Residues 40 to 56 form a helical membrane-spanning segment; the sequence is KGDRGFIEGCLFALCCC.

This sequence belongs to the CYSTM1 family. Homodimer and heterodimers. Binds weakly to CYSTM4, CYSTM6 and CYSTM7. Mostly expressed in roots, flowers and siliques and, to a lower extent, in stems and leaves.

The protein localises to the cell membrane. The protein resides in the cytoplasm. Functionally, involved in resistance to abiotic stress. The chain is Protein CYSTEINE-RICH TRANSMEMBRANE MODULE 12 from Arabidopsis thaliana (Mouse-ear cress).